The following is a 127-amino-acid chain: MFIKFKISNRPIAPHLLVYTPQLSSLFSIWHRISGVGLAFFFTTFLIFIRIILSSNFACNLLTLISFEISQWIIIYFNLFILLFLFYHLFNGTRHIIWDFGFLLDIKYLSKFSLFLLVSLSLILIFQ.

The next 2 helical transmembrane spans lie at 36-53 (VGLAFFFTTFLIFIRIIL) and 60-83 (NLLTLISFEISQWIIIYFNLFILL). H88 is a heme binding site. The helical transmembrane segment at 109-126 (LSKFSLFLLVSLSLILIF) threads the bilayer.

This sequence belongs to the cytochrome b560 family. As to quaternary structure, forms part of complex II containing four subunits: a 70 kDa flavoprotein (FP), a 27 kDa iron-sulfur protein (IP), a cytochrome B and a membrane-anchoring protein. It depends on heme as a cofactor.

It localises to the mitochondrion inner membrane. Its pathway is carbohydrate metabolism; tricarboxylic acid cycle. Functionally, membrane-anchoring subunit of succinate dehydrogenase (SDH) that is involved in complex II of the mitochondrial electron transport chain and is responsible for transferring electrons from succinate to ubiquinone (coenzyme Q). This Chondrus crispus (Carrageen Irish moss) protein is Succinate dehydrogenase cytochrome b560 subunit (SDH3).